We begin with the raw amino-acid sequence, 187 residues long: Putative manganese efflux pump MntP (187 aa).

Helical transmembrane passes span Leu3–Gly23, Leu41–Ala61, Thr62–Gly82, Leu106–Leu128, Ala142–Gly162, and Ile167–Gly187.

It belongs to the MntP (TC 9.B.29) family.

It localises to the cell inner membrane. Its function is as follows. Probably functions as a manganese efflux pump. The protein is Putative manganese efflux pump MntP of Cronobacter sakazakii (strain ATCC BAA-894) (Enterobacter sakazakii).